Reading from the N-terminus, the 329-residue chain is Dapdiamide synthesis protein DdaC (329 aa).

It depends on Fe(2+) as a cofactor.

It functions in the pathway antibiotic biosynthesis. Functionally, involved in dapdiamide antibiotics biosynthesis. Catalyzes the alpha-ketoglutarate-dependent epoxidation of the covalently bound N-beta-fumaramoyl-DAP-S-DdaD to generate N-beta-epoxysuccinamoyl-DAP in thioester linkage to DdaD. The polypeptide is Dapdiamide synthesis protein DdaC (Enterobacter agglomerans (Erwinia herbicola)).